The primary structure comprises 434 residues: Histidinol dehydrogenase (434 aa).

NAD(+) contacts are provided by tyrosine 130, glutamine 191, and asparagine 214. Positions 237, 259, and 262 each coordinate substrate. Glutamine 259 and histidine 262 together coordinate Zn(2+). Active-site proton acceptor residues include glutamate 328 and histidine 329. Substrate-binding residues include histidine 329, aspartate 362, glutamate 416, and histidine 421. A Zn(2+)-binding site is contributed by aspartate 362. A Zn(2+)-binding site is contributed by histidine 421.

This sequence belongs to the histidinol dehydrogenase family. Zn(2+) is required as a cofactor.

It carries out the reaction L-histidinol + 2 NAD(+) + H2O = L-histidine + 2 NADH + 3 H(+). Its pathway is amino-acid biosynthesis; L-histidine biosynthesis; L-histidine from 5-phospho-alpha-D-ribose 1-diphosphate: step 9/9. Catalyzes the sequential NAD-dependent oxidations of L-histidinol to L-histidinaldehyde and then to L-histidine. In Rhodospirillum rubrum (strain ATCC 11170 / ATH 1.1.1 / DSM 467 / LMG 4362 / NCIMB 8255 / S1), this protein is Histidinol dehydrogenase.